We begin with the raw amino-acid sequence, 737 residues long: Palmitoyltransferase AKR1 (737 aa).

The segment at 1–47 (MKQIDSEDSITVPNDTPEDNSASSMQPVMSNLSIEEHQSENEPIEQE) is disordered. The Cytoplasmic portion of the chain corresponds to 1–304 (MKQIDSEDSI…VYFKKSLHTK (304 aa)). The span at 9 to 33 (SITVPNDTPEDNSASSMQPVMSNLS) shows a compositional bias: polar residues. ANK repeat units lie at residues 54-84 (PLLS…DLKH), 90-119 (ERVS…DVNF), 124-153 (LNAT…DPSV), 157-190 (QGFN…DIDC), 194-223 (NGRT…SVKA), and 227-256 (GGFT…DFFQ). 2 helical membrane passes run 305 to 325 (LVTF…FASI) and 326 to 346 (HPIF…YTLK). The Cytoplasmic portion of the chain corresponds to 347 to 364 (KYVIPAYAQRNTRQSFLK). Residues 365–385 (TPFLAGVFSGSVFWASYTWLT) form a helical membrane-spanning segment. Residues 386-396 (RIMPLTLIEEP) are Lumenal-facing. Residues 397–417 (ITNLLFFAGVVLLASLFVKLV) traverse the membrane as a helical segment. Over 418–493 (RSDPGLIPEE…YNDIGLRNHK (76 aa)) the chain is Cytoplasmic. A DHHC domain is found at 450-500 (HFCISTWVRKPIRSKFSNFSRALVTRFDHFCPWIYNDIGLRNHKTFLFFIL). C480 functions as the S-palmitoyl cysteine intermediate in the catalytic mechanism. The helical transmembrane segment at 494–514 (TFLFFILCLETCIFVFLKLCM) threads the bilayer. Residues 515–547 (EYFDVLEDTFEDDYDLNCGIFGEDLCAGFFFDT) lie on the Lumenal side of the membrane. A helical membrane pass occupies residues 548–568 (FTFLVLAWTCFQGIWVGFLTF). The Cytoplasmic segment spans residues 569–737 (VQLFQTAKGV…ERHYLAEEIV (169 aa)).

This sequence belongs to the DHHC palmitoyltransferase family. AKR/ZDHHC17 subfamily.

Its subcellular location is the early endosome membrane. The protein localises to the golgi apparatus membrane. It catalyses the reaction L-cysteinyl-[protein] + hexadecanoyl-CoA = S-hexadecanoyl-L-cysteinyl-[protein] + CoA. In terms of biological role, palmitoyltransferase specific for casein kinase 1. The sequence is that of Palmitoyltransferase AKR1 (AKR1) from Lachancea kluyveri (strain ATCC 58438 / CBS 3082 / BCRC 21498 / NBRC 1685 / JCM 7257 / NCYC 543 / NRRL Y-12651) (Yeast).